The sequence spans 349 residues: Peptide transport system ATP-binding protein SapD (349 aa).

The region spanning 1 to 259 is the ABC transporter domain; sequence MALLDICNLN…PHHPYTQALI (259 aa). Residue 40 to 47 participates in ATP binding; sequence GESGSGKS.

Belongs to the ABC transporter superfamily.

It localises to the cell inner membrane. Functionally, involved in a peptide intake transport system that plays a role in the resistance to antimicrobial peptides. This chain is Peptide transport system ATP-binding protein SapD (sapD), found in Haemophilus influenzae (strain ATCC 51907 / DSM 11121 / KW20 / Rd).